The sequence spans 578 residues: Pentatricopeptide repeat-containing protein At4g22760 (578 aa).

13 PPR repeats span residues 68-102, 103-137, 138-168, 169-203, 204-230, 231-261, 262-292, 293-327, 330-364, 365-395, 396-430, 431-465, and 466-496; these read DSFSWGCLVRFLSQHRKFKETVDVYIDMHNSGIPP, SSHAVTSVLRACGKMENMVDGKPIHAQALKNGLCG, CVYVQTGLVGLYSRLGYIELAKKAFDDIAEK, NTVSWNSLLHGYLESGELDEARRVFDKIPEKDAVS, WNLIISSYAKKGDMGNACSLFSAMPLK, SPASWNILIGGYVNCREMKLARTYFDAMPQK, NGVSWITMISGYTKLGDVQSAEELFRLMSKK, DKLVYDAMIACYTQNGKPKDALKLFAQMLERNSYI, DEITLSSVVSANSQLGNTSFGTWVESYITEHGIKI, DDLLSTSLIDLYMKGGDFAKAFKMFSNLNKK, DTVSYSAMIMGCGINGMATEANSLFTAMIEKKIPP, NVVTFTGLLSAYSHSGLVQEGYKCFNSMKDHNLEP, and SADHYGIMVDMLGRAGRLEEAYELIKSMPMQ. Residues 501 to 576 are type E motif; it reads VWGALLLASG…TLGCSWVEGS (76 aa).

Belongs to the PPR family. PCMP-E subfamily.

The polypeptide is Pentatricopeptide repeat-containing protein At4g22760 (PCMP-E6) (Arabidopsis thaliana (Mouse-ear cress)).